Consider the following 513-residue polypeptide: MPRKKVTDGSGPGNGAARPANRKKAAASGKKRSRHEFSSDEDDLDGSPGSDGGFQGHNNKRGPAKGATKAPTAVIVTEPEHSKEKIKLEGSKAKGQLLIFGATNWDLIGRKEVPKQQAAYRNLGQNLWGPHRYGCLTGVQVRSVASGSCAAHSLLITVEGKLWSWGRNDKGQLGHGDIKRIDVPKLIESLKGEVFVHAACGRNHTLALTENGSVYAFGENKMGQLGLGNKTDAVPSPAQILYNGQPITKVACGAEFSMIMDCKGNLYSFGCPEYGQLGHNSDGKYIARAQRIEYDCELIARRIAIFIEKTKDGQILPVPNVVVRDIACGINHSLILDSQKRVFSWGFGGYGRLGHSEQRDEMVPRLVKLFDFPGRGAAQIYAGATCSFAVSEMGGLFFWGATNTSRDSTMYPKAVQDLCGWKVRSLACGKSSIIVAADESTISWGPSPTFGELGYGDNKAKSSTTAQEVKTLDGIYSDQVIMGNSHTLVVARDETEQDKEKLKKLPEYNPRTL.

Positions 1 to 70 are disordered; the sequence is MPRKKVTDGS…RGPAKGATKA (70 aa). Basic residues predominate over residues 20–34; that stretch reads ANRKKAAASGKKRSR. RCC1 repeat units lie at residues 94-156, 159-210, 212-262, 264-338, 339-392, 394-438, and 439-492; these read KGQL…SLLI, EGKL…ALTE, GSVY…IMDC, GNLY…ILDS, QKRV…AVSE, GGLF…VAAD, and ESTI…VVAR. A required for interaction with RAC1 region spans residues 309–316; the sequence is KTKDGQIL. The segment covering 492–506 has biased composition (basic and acidic residues); it reads RDETEQDKEKLKKLP. A disordered region spans residues 492–513; sequence RDETEQDKEKLKKLPEYNPRTL.

In terms of assembly, interacts with RAC1. Interacts with CORO1C.

The protein resides in the nucleus. It localises to the nucleolus. It is found in the cytoplasm. Its subcellular location is the cytoskeleton. The protein localises to the chromosome. The protein resides in the centromere. It localises to the spindle. It is found in the midbody. Its subcellular location is the cell membrane. Its function is as follows. Multifunctional protein that may affect its functions by regulating the activity of small GTPases, such as RAC1 and RALA. Required for normal progress through the cell cycle, both during interphase and during mitosis. Required for normal attachment of kinetochores to mitotic spindles. Required for normal organization of the microtubule cytoskeleton in interphase cells. Interferes with the activation of RAC1 by guanine nucleotide exchange factors. Prevents accumulation of active, GTP-bound RAC1, and suppresses RAC1-mediated reorganization of the actin cytoskeleton and formation of membrane protrusions. Required for normal cellular responses to contacts with the extracellular matrix of adjacent cells, and for directional cell migration. The sequence is that of Protein RCC2 homolog (rcc2) from Xenopus laevis (African clawed frog).